A 468-amino-acid polypeptide reads, in one-letter code: MEGMLSSGDQQRLVSSFLEIAVGQTAETARQFLQATSWKLEEAIQLFYIGNEGGMLQSGTHTQPASNDDAAAQSWGAATGTGNEMILPNDVDEVRAPLPVVRETLYGESMYYGAMRVGNSQPEPNSLIAFRNFSEEPKSPGIWEPDEGDSSASASASASASESASAPRDSLASLYRPPFHLMFQGSFEQAKTTSSSQDKWLLVNLQSTTEFSSHMLNRDTWANDAVSQTIKANFIFWQVYDDTTEGRKVCTYYKLESIPVVLVIDPTTGQRMRMWTGMVDPENLLEDLVPFMDGGPREHFASLSKKRPRGSFSLTPHSKPKEDVAKDEEEEELQRALAASLEDNNMKESSDDQSTIIPEEVAVEAVTSAVLPTFPPLPEEPKGGDRSLQCRVGIRLPNGQRLQRNFLKTDTIQLLWSFCYSQLEESERKKPLKLTQAIPGESKTLEYESNLTLEQSGVANSMISATWE.

Met1 carries the N-acetylmethionine modification. Residues 7 to 48 (SGDQQRLVSSFLEIAVGQTAETARQFLQATSWKLEEAIQLFY) enclose the UBA-like domain. 2 disordered regions span residues 138–168 (KSPG…SAPR) and 299–329 (HFAS…KDEE). Low complexity predominate over residues 150–166 (SSASASASASASESASA). The UIM domain maps to 328 to 347 (EEEEELQRALAASLEDNNMK). A UBX domain is found at 385 to 466 (DRSLQCRVGI…GVANSMISAT (82 aa)).

As to quaternary structure, interacts with CDC48A via its UBX domain and with ubiquitin via its N-terminal UBA-like domain. Expressed broadly in sporophyte and gametophyte cells.

Its subcellular location is the nucleus. Its function is as follows. Acts as a bridge between CDC48A and ubiquitin, suggesting a role in targeted protein degradation. This chain is Plant UBX domain-containing protein 7, found in Arabidopsis thaliana (Mouse-ear cress).